The primary structure comprises 342 residues: Prostasin (342 aa).

The N-terminal stretch at 1–29 (MAPRVGLGLGQLEAVTILLLLGLLQSGIR) is a signal peptide. Residues 30–32 (ADG) constitute a propeptide, activation peptide. 2 disulfides stabilise this stretch: Cys37-Cys154 and Cys70-Cys86. Positions 45–286 (ITGGGSAKPG…YASWIHHHVA (242 aa)) constitute a Peptidase S1 domain. His85 (charge relay system) is an active-site residue. A glycan (N-linked (GlcNAc...) asparagine) is linked at Asn110. Asp134 (charge relay system) is an active-site residue. N-linked (GlcNAc...) asparagine glycosylation occurs at Asn159. 3 disulfides stabilise this stretch: Cys168-Cys244, Cys201-Cys223, and Cys234-Cys262. Ser238 functions as the Charge relay system in the catalytic mechanism. Residues 320-340 (LLRPVLFLPLGLTLGLLSLWL) traverse the membrane as a helical segment. The propeptide occupies 323-342 (PVLFLPLGLTLGLLSLWLEH).

Belongs to the peptidase S1 family. As to quaternary structure, heterodimer of two chains, light and heavy, held by a disulfide bond.

It is found in the cell membrane. Its subcellular location is the secreted. The protein resides in the extracellular space. Its function is as follows. Possesses a trypsin-like cleavage specificity with a preference for poly-basic substrates. Stimulates epithelial sodium channel (ENaC) activity through activating cleavage of the gamma subunits (SCNN1G). The protein is Prostasin (Prss8) of Mus musculus (Mouse).